Here is a 150-residue protein sequence, read N- to C-terminus: Transcriptional regulator MraZ (150 aa).

SpoVT-AbrB domains are found at residues 7-58 (KEQH…EPEI) and 87-130 (LDSV…SPEK).

Belongs to the MraZ family. As to quaternary structure, forms oligomers.

It localises to the cytoplasm. It is found in the nucleoid. This is Transcriptional regulator MraZ from Chlorobium phaeobacteroides (strain BS1).